The following is a 128-amino-acid chain: Large ribosomal subunit protein bL17 (128 aa).

The protein belongs to the bacterial ribosomal protein bL17 family. In terms of assembly, part of the 50S ribosomal subunit. Contacts protein L32.

The polypeptide is Large ribosomal subunit protein bL17 (Pseudomonas syringae pv. tomato (strain ATCC BAA-871 / DC3000)).